Here is a 477-residue protein sequence, read N- to C-terminus: MTTNTGKVTQIIGPVIDITFPIEAMSSVNIYDAVVIEDKTEKLSVTCEIQQLIGSQSVRTVSMSSTDRIKRGMDVVQTGTAIAVPVGKSTLRRIFNVLGQPIDNLGDVKNEETRPIHRSAPEFVDLDIRLEIFETGIKVIDLLAPYRRGGKVGLFGGAGVGKTVLIMELINNIAKAHGGVSVFAGVGERTREGNDLYAEMKESGVIVEDNLLESKVTLVYGQMNEPPGARMRVGLAALTMAEFFRDSSKQDVLLFIDNVFRFVQAGSEVSALLGRMPSAVGYQPTLATEMGGLQERITSTKDGSITSIQAVYVPADDLTDPAAATTFAHLDATTVLSRGLASKGIYPAVDPLGSTSTMLQPWIVGDSHYECAQKVKQTLQRYKELQDIIAILGLEELSEEDRLTVDRARKIERFLSQPFFVAEIFTGLAGKYVGLNETIFGFNKILSGDLDSYNEQAFYLVGNLTDAEGKMKTISEN.

156-163 (GGAGVGKT) lines the ATP pocket.

This sequence belongs to the ATPase alpha/beta chains family. In terms of assembly, F-type ATPases have 2 components, CF(1) - the catalytic core - and CF(0) - the membrane proton channel. CF(1) has five subunits: alpha(3), beta(3), gamma(1), delta(1), epsilon(1). CF(0) has four main subunits: a(1), b(1), b'(1) and c(9-12).

The protein localises to the plastid. It localises to the chloroplast thylakoid membrane. It catalyses the reaction ATP + H2O + 4 H(+)(in) = ADP + phosphate + 5 H(+)(out). Its function is as follows. Produces ATP from ADP in the presence of a proton gradient across the membrane. The catalytic sites are hosted primarily by the beta subunits. This Bigelowiella natans (Pedinomonas minutissima) protein is ATP synthase subunit beta, chloroplastic.